The sequence spans 521 residues: Bifunctional purine biosynthesis protein PurH (521 aa).

In terms of domain architecture, MGS-like spans 1–145; sequence MIKQALISVS…KNHRDVTVVV (145 aa).

It belongs to the PurH family.

The enzyme catalyses (6R)-10-formyltetrahydrofolate + 5-amino-1-(5-phospho-beta-D-ribosyl)imidazole-4-carboxamide = 5-formamido-1-(5-phospho-D-ribosyl)imidazole-4-carboxamide + (6S)-5,6,7,8-tetrahydrofolate. It carries out the reaction IMP + H2O = 5-formamido-1-(5-phospho-D-ribosyl)imidazole-4-carboxamide. It participates in purine metabolism; IMP biosynthesis via de novo pathway; 5-formamido-1-(5-phospho-D-ribosyl)imidazole-4-carboxamide from 5-amino-1-(5-phospho-D-ribosyl)imidazole-4-carboxamide (10-formyl THF route): step 1/1. Its pathway is purine metabolism; IMP biosynthesis via de novo pathway; IMP from 5-formamido-1-(5-phospho-D-ribosyl)imidazole-4-carboxamide: step 1/1. This Burkholderia vietnamiensis (strain G4 / LMG 22486) (Burkholderia cepacia (strain R1808)) protein is Bifunctional purine biosynthesis protein PurH.